A 303-amino-acid chain; its full sequence is MAAVAVLRAFGASGPMCLRRGPWAQLPARFCSRDPAGAGRRESEPRPTSARQLDGIRNIVLSNPKKRNALSLAMLKSLQSDILHDADSNDLKVIIISAEGPVFSSGHDLKELTEEQGRDYHAEVFQTCSKVMMHIRNHPVPVIAMVNGLAAAAGCQLVASCDIAVASDKSSFATPGVNVGLFCSTPGVALARAVPRKVALEMLFTGEPISAQEALLHGLLSKVVPEAELQEETMRIARKIASLSRPVVSLGKATFYKQLPQDLGTAYYLTSQAMVDNLALRDGQEGITAFLQKRKPVWSHEPV.

The transit peptide at 1–17 directs the protein to the mitochondrion; that stretch reads MAAVAVLRAFGASGPMC. K110 carries the post-translational modification N6-succinyllysine.

This sequence belongs to the enoyl-CoA hydratase/isomerase family. As to expression, expressed in adipocytes. Expressed in blood cells, with higher expression in patients with low coronary lesions.

Its subcellular location is the mitochondrion. May play a role in fatty acid biosynthesis and insulin sensitivity. This is Enoyl-CoA hydratase domain-containing protein 3, mitochondrial from Homo sapiens (Human).